Reading from the N-terminus, the 374-residue chain is Protein-glutamate methylesterase/protein-glutamine glutaminase (374 aa).

Positions 4-121 (KVLVVDDSGF…SRNPDKVKQM (118 aa)) constitute a Response regulatory domain. At Asp55 the chain carries 4-aspartylphosphate. The disordered stretch occupies residues 144-186 (PVAAPVPASSPAPASSFASPAPARPAATARAAAPAASHSPAPK). Residues 154–183 (PAPASSFASPAPARPAATARAAAPAASHSP) show a composition bias toward low complexity. The 192-residue stretch at 183-374 (PAPKRKPYKL…IGKHLVEACV (192 aa)) folds into the CheB-type methylesterase domain. Catalysis depends on residues Ser198, His225, and Asp318.

It belongs to the CheB family. Post-translationally, phosphorylated by CheA. Phosphorylation of the N-terminal regulatory domain activates the methylesterase activity.

It localises to the cytoplasm. The enzyme catalyses [protein]-L-glutamate 5-O-methyl ester + H2O = L-glutamyl-[protein] + methanol + H(+). It catalyses the reaction L-glutaminyl-[protein] + H2O = L-glutamyl-[protein] + NH4(+). Functionally, involved in chemotaxis. Part of a chemotaxis signal transduction system that modulates chemotaxis in response to various stimuli. Catalyzes the demethylation of specific methylglutamate residues introduced into the chemoreceptors (methyl-accepting chemotaxis proteins or MCP) by CheR. Also mediates the irreversible deamidation of specific glutamine residues to glutamic acid. The chain is Protein-glutamate methylesterase/protein-glutamine glutaminase from Pseudomonas putida (Arthrobacter siderocapsulatus).